Reading from the N-terminus, the 547-residue chain is MGKVNVAKLRYMSRDDFRVLTAVEMGMKNHEIVPCSLIASIASLKHGGCNKILRELVKHKLIAWERTKTVQGYRLTNAGYDYLALKTLSSRQVVESVGNQMGVGKESDIYIVANEAGQQLALKLHRLGRTSFRNLKNKRDYHKHRHNVSWLYLSRLSAMKEFAYMKALYERKFPVPKPIDYNRHAVIMELINGYPLCQIHHVEDPASVYDEAMELIVKLGNHGLIHGDFNEFNLMLDKDDHITMIDFPQMVSTSHPNAEWYFDRDVKCIREFFMKRFSYESELYPTFSDIRKEDSLDVEVSASGYTKEMQADDELLHPVGPDDKITETEEDSDFTFSDEEMLEKAKVWRSELEKEADPADESGGSWCCSSTDSKQIKDGGLPEESAHVSSFEVTALSQAVEEMERQVLPHRSVTEFSEESRRTENDGQPGQRSPAGSEDCDDEPPHLIALSSVNREFRPFRDEESMSSVTRHRTRTLSVTSAGSALSCSTIPPELVKQKVKRQLTRQQKAAARRRLQKGEANVFTKQRRENMQNIKSSLEAASFWGD.

The region spanning 97–273 (VGNQMGVGKE…RDVKCIREFF (177 aa)) is the Protein kinase domain. Lys-123 contributes to the ATP binding site. Asp-228 serves as the catalytic Proton acceptor. A phosphoserine mark is found at Ser-332, Ser-337, Ser-350, Ser-362, Ser-385, and Ser-390. Positions 352 to 385 (LEKEADPADESGGSWCCSSTDSKQIKDGGLPEES) are disordered. The Nuclear export signal motif lies at 399–408 (AVEEMERQVL). The segment at 404–445 (ERQVLPHRSVTEFSEESRRTENDGQPGQRSPAGSEDCDDEPP) is disordered. Phosphoserine occurs at positions 412, 417, 433, 437, and 543.

The protein belongs to the protein kinase superfamily. RIO-type Ser/Thr kinase family. In terms of assembly, associated with late 40S pre-ribosomal particles. Interacts with PLK1 (via its N-terminus). Requires Mg(2+) as cofactor. Autophosphorylated (in vitro). Phosphorylation affects the timing of the metaphase-anaphase transition.

The protein resides in the cytoplasm. The catalysed reaction is L-seryl-[protein] + ATP = O-phospho-L-seryl-[protein] + ADP + H(+). It carries out the reaction L-threonyl-[protein] + ATP = O-phospho-L-threonyl-[protein] + ADP + H(+). Functionally, serine/threonine-protein kinase involved in the final steps of cytoplasmic maturation of the 40S ribosomal subunit. Involved in export of the 40S pre-ribosome particles (pre-40S) from the nucleus to the cytoplasm. Its kinase activity is required for the release of NOB1, PNO1 and LTV1 from the late pre-40S and the processing of 18S-E pre-rRNA to the mature 18S rRNA. May regulate the timing of the metaphase-anaphase transition during mitotic progression, and its phosphorylation, may regulate this function. The chain is Serine/threonine-protein kinase RIO2 (Riok2) from Mus musculus (Mouse).